We begin with the raw amino-acid sequence, 534 residues long: (E)-beta-farnesene synthase (534 aa).

The Mg(2+) site is built by Asp-287, Asp-291, Asn-431, Ser-435, and Glu-439. The short motif at 287–291 (DDMMD) is the DDXXD motif element.

It belongs to the terpene synthase family. Requires Mg(2+) as cofactor. The cofactor is Co(2+). Mn(2+) serves as cofactor.

It is found in the cytoplasm. It carries out the reaction (2E,6E)-farnesyl diphosphate = (E)-beta-farnesene + diphosphate. It functions in the pathway secondary metabolite biosynthesis; terpenoid biosynthesis. In terms of biological role, sesquiterpene cyclase catalyzing the production of beta-farnesene and alpha-bergamotene in equal amounts from farnesyl diphosphate. Involved in indirect defense by producing volatile signals attracting natural enemies of herbivores. This chain is (E)-beta-farnesene synthase, found in Zea mays subsp. mexicana (Mexican teosinte).